Consider the following 633-residue polypeptide: Threonine--tRNA ligase (633 aa).

One can recognise a TGS domain in the interval 1-59; that stretch reads MIRITFSAEQKVKEYSGKVTGFDILQPDVLKEAIAFKVNGELHDLSREIEADAEIEVIQ. The tract at residues 240–532 is catalytic; that stretch reads DHRKIAKDMD…LIENYAGKFP (293 aa). 3 residues coordinate Zn(2+): Cys-332, His-383, and His-509.

It belongs to the class-II aminoacyl-tRNA synthetase family. As to quaternary structure, homodimer. Zn(2+) is required as a cofactor.

The protein localises to the cytoplasm. The enzyme catalyses tRNA(Thr) + L-threonine + ATP = L-threonyl-tRNA(Thr) + AMP + diphosphate + H(+). In terms of biological role, catalyzes the attachment of threonine to tRNA(Thr) in a two-step reaction: L-threonine is first activated by ATP to form Thr-AMP and then transferred to the acceptor end of tRNA(Thr). Also edits incorrectly charged L-seryl-tRNA(Thr). The polypeptide is Threonine--tRNA ligase (Wolbachia sp. subsp. Drosophila simulans (strain wRi)).